Consider the following 86-residue polypeptide: UPF0213 protein OB0043 (86 aa).

Residues 3–80 (EQHYVYILRC…LPRFEKLKLI (78 aa)) enclose the GIY-YIG domain.

This sequence belongs to the UPF0213 family.

This chain is UPF0213 protein OB0043, found in Oceanobacillus iheyensis (strain DSM 14371 / CIP 107618 / JCM 11309 / KCTC 3954 / HTE831).